A 363-amino-acid chain; its full sequence is MIIDTTEVQAINSFSRSESLKEAYGLIWLLVPIFTPVSGITIGVLVIVWLEREISAGIQQRIGPEYAGPLGILQALADGTKLLFKEDLLPSRGDTRLFSIGPSIAIISILLSYSVIPFGYRLVLADLSIGVFLWIAISSIAPIGLLMSGYGSNNKYSFSGGLRAAAQSISYEIPLTLCVLSISLLSNSLSTVDIVEAQSKYGFWGWNLWRQPIGFAVFLISSLAECERLPFDLPEAEEELVAGYQTEYSGIKFGLFYVASYLNLLVSSLFVTVLYLGGWNLSIPYIFIPELFEINKVSGVFGTTIGIFITLAKAYLFLFISITTRWTLPRMRMDQLLNLGWKFLLPISLGNLLLTTSSQLFSL.

Transmembrane regions (helical) follow at residues 27–47 (IWLLVPIFTPVSGITIGVLVI), 98–118 (FSIGPSIAIISILLSYSVIPF), 127–147 (LSIGVFLWIAISSIAPIGLLM), 248–268 (YSGIKFGLFYVASYLNLLVSS), 300–320 (VFGTTIGIFITLAKAYLFLFI), and 336–356 (LLNLGWKFLLPISLGNLLLTT).

Belongs to the complex I subunit 1 family. In terms of assembly, NDH is composed of at least 16 different subunits, 5 of which are encoded in the nucleus.

The protein localises to the plastid. Its subcellular location is the chloroplast thylakoid membrane. The catalysed reaction is a plastoquinone + NADH + (n+1) H(+)(in) = a plastoquinol + NAD(+) + n H(+)(out). It carries out the reaction a plastoquinone + NADPH + (n+1) H(+)(in) = a plastoquinol + NADP(+) + n H(+)(out). Its function is as follows. NDH shuttles electrons from NAD(P)H:plastoquinone, via FMN and iron-sulfur (Fe-S) centers, to quinones in the photosynthetic chain and possibly in a chloroplast respiratory chain. The immediate electron acceptor for the enzyme in this species is believed to be plastoquinone. Couples the redox reaction to proton translocation, and thus conserves the redox energy in a proton gradient. The protein is NAD(P)H-quinone oxidoreductase subunit 1, chloroplastic of Platanus occidentalis (Sycamore).